Consider the following 1961-residue polypeptide: Myosin-9 (1961 aa).

An N-acetylalanine modification is found at Ala2. Residues 2 to 838 (AQQAADKYLY…RLFTKVKPLL (837 aa)) are mediates interaction with LIMCH1. An N6-acetyllysine modification is found at Lys8. Tyr11 carries the phosphotyrosine modification. Residues 27–77 (GAKKLVWVPSTKNGFEPASLKEEVGEEAIVELVENGKKVKVNKDDIQKMNP) enclose the Myosin N-terminal SH3-like domain. The Myosin motor domain occupies 81–776 (SKVEDMAELT…VLAHLEEERD (696 aa)). Position 102 is an N6-acetyllysine (Lys102). 174–181 (GESGAGKT) lines the ATP pocket. 3 positions are modified to N6-acetyllysine: Lys299, Lys435, and Lys613. Ser628 carries the phosphoserine modification. Residues 654–676 (LAKLMATLRNTNPNFVCCIIPNH) are actin-binding. Tyr754 bears the Phosphotyrosine mark. The region spanning 779 to 808 (ITDVIIGFQACCRGYLARKAFAKRQQQLTA) is the IQ domain. A coiled-coil region spans residues 841–1927 (IRHEDELLAK…LKNKLRRGDM (1087 aa)). The residue at position 850 (Lys850) is an N6-succinyllysine. N6-acetyllysine occurs at positions 860, 975, and 1024. A compositionally biased stretch (basic and acidic residues) spans 1035–1055 (RLRREEKQRQELEKTRRKLEG). Residues 1035–1057 (RLRREEKQRQELEKTRRKLEGDS) form a disordered region. Ser1114 bears the Phosphoserine mark. Lys1234 and Lys1249 each carry N6-acetyllysine. The tract at residues 1331-1353 (LKQMEDEKNSFREQLEEEEEEAK) is disordered. The segment covering 1332-1344 (KQMEDEKNSFREQ) has biased composition (basic and acidic residues). N6-acetyllysine occurs at positions 1358, 1393, 1405, 1411, 1460, and 1639. N6-succinyllysine is present on Lys1670. Residue Ser1715 is modified to Phosphoserine. N6-acetyllysine is present on residues Lys1794, Lys1803, and Lys1846. The segment at 1878–1910 (RQLEEAEEEAQRANASRRKLQRELEDATETADA) is disordered. Arg1924 is subject to Omega-N-methylarginine. The segment at 1938-1961 (KGTGDCSDEEVDGKADGADAKATE) is disordered. Position 1944 is a phosphoserine (Ser1944). Residues 1949 to 1961 (DGKADGADAKATE) show a composition bias toward basic and acidic residues.

It belongs to the TRAFAC class myosin-kinesin ATPase superfamily. Myosin family. Myosin is a hexameric protein that consists of 2 heavy chain subunits (MHC), 2 alkali light chain subunits (MLC) and 2 regulatory light chain subunits (MLC-2). Interacts with RASIP1. Interacts with DDR1. Interacts with PDLIM2. Interacts with SVIL. Interacts with HTRA3. Interacts with Myo7a. Interacts with CFAP95. Interacts with LIMCH1; independently of the integration of MYH9 into the myosin complex. Interacts with RAB3A. Interacts with ZBED4. Interacts with S100A4; this interaction increases cell motility. In terms of processing, ISGylated. Ubiquitination.

It localises to the cytoplasm. It is found in the cytoskeleton. Its subcellular location is the cell cortex. The protein localises to the cytoplasmic vesicle. The protein resides in the secretory vesicle. It localises to the cortical granule. Cellular myosin that appears to play a role in cytokinesis, cell shape, and specialized functions such as secretion and capping. Required for cortical actin clearance prior to oocyte exocytosis. Promotes cell motility in conjunction with S100A4. During cell spreading, plays an important role in cytoskeleton reorganization, focal contact formation (in the margins but not the central part of spreading cells), and lamellipodial retraction; this function is mechanically antagonized by MYH10. In Rattus norvegicus (Rat), this protein is Myosin-9 (Myh9).